The primary structure comprises 437 residues: MKYTTQMDAARKGIITKEMEIVSKKENMDIEILREKMAKGQIVIPANKNHKSLDPEGIGSGLKTKINVNLGISRDCPNVDAELEKVKIAIDMKAEAIMDLSSFGKTEEFRQKLVNMSTAMIGTVPIYDAVGFYDKELKDITEKEFLDVVRKHGEDGVDFVTIHAGLNRDTVKTFKKNTRVTNIVSRGGSLLYAWMELNNKENPFYEYYDELLEICAAYDMTISLGDALRPGSIADGTDASQIAELMVLGELTKRAWEKNVQVIIEGPGHMKLNEIEANVILEKKLCHGAPFYVLGPLVTDIAPGYDHITSAIGGAIAASHGVDFLCYVTPAEHLRLPTLEDMKEGIIASKIAAHAGDLAKGVQGADEWDLKMSKARQKLDWEEMFSLSIDDEKARRYRKESSPEHEDSCTMCGKMCSMRNMNRIMEGKDINILRSED.

Residues asparagine 69, methionine 98, tyrosine 127, histidine 163, 185–187 (SRG), 226–229 (DALR), and glutamate 265 contribute to the substrate site. Histidine 269 serves as a coordination point for Zn(2+). Residue tyrosine 292 participates in substrate binding. Histidine 333 serves as a coordination point for Zn(2+). Residues cysteine 409, cysteine 412, and cysteine 416 each coordinate [4Fe-4S] cluster.

This sequence belongs to the ThiC family. [4Fe-4S] cluster is required as a cofactor.

The enzyme catalyses 5-amino-1-(5-phospho-beta-D-ribosyl)imidazole + S-adenosyl-L-methionine = 4-amino-2-methyl-5-(phosphooxymethyl)pyrimidine + CO + 5'-deoxyadenosine + formate + L-methionine + 3 H(+). The protein operates within cofactor biosynthesis; thiamine diphosphate biosynthesis. Its function is as follows. Catalyzes the synthesis of the hydroxymethylpyrimidine phosphate (HMP-P) moiety of thiamine from aminoimidazole ribotide (AIR) in a radical S-adenosyl-L-methionine (SAM)-dependent reaction. This is Phosphomethylpyrimidine synthase from Alkaliphilus oremlandii (strain OhILAs) (Clostridium oremlandii (strain OhILAs)).